Consider the following 152-residue polypeptide: Large ribosomal subunit protein bL9 (152 aa).

It belongs to the bacterial ribosomal protein bL9 family.

Its function is as follows. Binds to the 23S rRNA. This chain is Large ribosomal subunit protein bL9, found in Mycobacterium marinum (strain ATCC BAA-535 / M).